A 560-amino-acid polypeptide reads, in one-letter code: Formate--tetrahydrofolate ligase (560 aa).

Residue 69–76 (TPAGEGKS) coordinates ATP.

The protein belongs to the formate--tetrahydrofolate ligase family.

It carries out the reaction (6S)-5,6,7,8-tetrahydrofolate + formate + ATP = (6R)-10-formyltetrahydrofolate + ADP + phosphate. The protein operates within one-carbon metabolism; tetrahydrofolate interconversion. The protein is Formate--tetrahydrofolate ligase of Bacillus pumilus (strain SAFR-032).